The sequence spans 68 residues: Guanine nucleotide-binding protein G(I)/G(S)/G(O) subunit gamma-10 (68 aa).

Serine 2 is subject to N-acetylserine. Cysteine 65 carries the cysteine methyl ester modification. Cysteine 65 is lipidated: S-geranylgeranyl cysteine. Residues 66 to 68 (ALL) constitute a propeptide, removed in mature form.

This sequence belongs to the G protein gamma family. As to quaternary structure, g proteins are composed of 3 units, alpha, beta and gamma. As to expression, abundantly and ubiquitously expressed.

It is found in the cell membrane. Guanine nucleotide-binding proteins (G proteins) are involved as a modulator or transducer in various transmembrane signaling systems. The beta and gamma chains are required for the GTPase activity, for replacement of GDP by GTP, and for G protein-effector interaction. Interacts with beta-1 and beta-2, but not with beta-3. The sequence is that of Guanine nucleotide-binding protein G(I)/G(S)/G(O) subunit gamma-10 (GNG10) from Homo sapiens (Human).